A 296-amino-acid chain; its full sequence is Protoheme IX farnesyltransferase (296 aa).

A run of 9 helical transmembrane segments spans residues 14-34 (IIFG…KGVI), 36-56 (YPLF…GCVF), 75-95 (VLVK…ILGI), 99-119 (LLLY…GFVI), 133-153 (VYGT…GYCA), 163-183 (LILL…IAIF), 209-229 (ITLY…SGYA), 234-254 (LVVA…GYKA), and 265-285 (FVFS…DFNV).

Belongs to the UbiA prenyltransferase family. Protoheme IX farnesyltransferase subfamily.

Its subcellular location is the cell inner membrane. It carries out the reaction heme b + (2E,6E)-farnesyl diphosphate + H2O = Fe(II)-heme o + diphosphate. Its pathway is porphyrin-containing compound metabolism; heme O biosynthesis; heme O from protoheme: step 1/1. Its function is as follows. Converts heme B (protoheme IX) to heme O by substitution of the vinyl group on carbon 2 of heme B porphyrin ring with a hydroxyethyl farnesyl side group. In Yersinia enterocolitica serotype O:8 / biotype 1B (strain NCTC 13174 / 8081), this protein is Protoheme IX farnesyltransferase.